Consider the following 450-residue polypeptide: MDLSAAAALCLWLLSACRPRDGLEAAAVLRAAGAGPVRSPGGGGGGGGGGRTLAQAAGAAAVPAAAVPRARAARRAAGSGFRNGSVVPHHFMMSLYRSLAGRAPAGAAAVSASGHGRADTITGFTDQATQDESAAETGQSFLFDVSSLNDADEVVGAELRVLRRGSPESGPGSWTSPPLLLLSTCPGAARAPRLLYSRAAEPLVGQRWEAFDVADAMRRHRREPRPPRAFCLLLRAVAGPVPSPLALRRLGFGWPGGGGSAAEERAVLVVSSRTQRKESLFREIRAQARALGAALASEPLPDPGTGTASPRAVIGGRRRRRTALAGTRTAQGSGGGAGRGHGRRGRSRCSRKPLHVDFKELGWDDWIIAPLDYEAYHCEGLCDFPLRSHLEPTNHAIIQTLLNSMAPDAAPASCCVPARLSPISILYIDAANNVVYKQYEDMVVEACGCR.

The N-terminal stretch at 1-19 is a signal peptide; sequence MDLSAAAALCLWLLSACRP. Residues 20–321 constitute a propeptide that is removed on maturation; the sequence is RDGLEAAAVL…AVIGGRRRRR (302 aa). N-linked (GlcNAc...) asparagine glycosylation is present at N83. The disordered stretch occupies residues 296–349; it reads ASEPLPDPGTGTASPRAVIGGRRRRRTALAGTRTAQGSGGGAGRGHGRRGRSRC. Residues 340 to 349 show a composition bias toward basic residues; the sequence is GHGRRGRSRC. Disulfide bonds link C349-C415, C378-C447, and C382-C449.

Belongs to the TGF-beta family. In terms of assembly, homodimer; disulfide-linked.

The protein resides in the secreted. In terms of biological role, may play an active role in the motor area of the primate neocortex. The sequence is that of Growth/differentiation factor 7 (GDF7) from Homo sapiens (Human).